A 211-amino-acid chain; its full sequence is MTPVASTSALNLARSLYEAGIRNEAVLQAVANTPREQFLDAALGHKAYENTALPIGQGQTISQPYIVAKMTEIILQTKPTKVLEIGTGSGYQAAILARLVPQLFTVERIKSLQIQARQRLKRLDLHNIAFKYGDGWEGWPSKGPYDAIMVTAAASSIPDALVSQLADGGILVIPVGEIAQQLLKVTRSGDKYRSEVVEDVRFVPLINGELA.

Ser62 is a catalytic residue.

It belongs to the methyltransferase superfamily. L-isoaspartyl/D-aspartyl protein methyltransferase family.

It localises to the cytoplasm. It catalyses the reaction [protein]-L-isoaspartate + S-adenosyl-L-methionine = [protein]-L-isoaspartate alpha-methyl ester + S-adenosyl-L-homocysteine. Its function is as follows. Catalyzes the methyl esterification of L-isoaspartyl residues in peptides and proteins that result from spontaneous decomposition of normal L-aspartyl and L-asparaginyl residues. It plays a role in the repair and/or degradation of damaged proteins. The protein is Protein-L-isoaspartate O-methyltransferase of Shewanella halifaxensis (strain HAW-EB4).